The sequence spans 146 residues: Large ribosomal subunit protein uL15 (146 aa).

A disordered region spans residues 1-58 (MNLSNLRAPKKANRNRKRVGRGMGSGHGKTSTRGHKGQRSRSGSRSMRGFEGGQMPLH). Composition is skewed to basic residues over residues 8–20 (APKK…KRVG) and 30–39 (TSTRGHKGQR). Low complexity predominate over residues 40–49 (SRSGSRSMRG).

The protein belongs to the universal ribosomal protein uL15 family. As to quaternary structure, part of the 50S ribosomal subunit.

Binds to the 23S rRNA. This is Large ribosomal subunit protein uL15 from Acidobacterium capsulatum (strain ATCC 51196 / DSM 11244 / BCRC 80197 / JCM 7670 / NBRC 15755 / NCIMB 13165 / 161).